The chain runs to 78 residues: Small ribosomal subunit protein bS18 (78 aa).

Belongs to the bacterial ribosomal protein bS18 family. As to quaternary structure, part of the 30S ribosomal subunit. Forms a tight heterodimer with protein bS6.

Its function is as follows. Binds as a heterodimer with protein bS6 to the central domain of the 16S rRNA, where it helps stabilize the platform of the 30S subunit. The polypeptide is Small ribosomal subunit protein bS18 (Beutenbergia cavernae (strain ATCC BAA-8 / DSM 12333 / CCUG 43141 / JCM 11478 / NBRC 16432 / NCIMB 13614 / HKI 0122)).